Here is a 349-residue protein sequence, read N- to C-terminus: tRNA pseudouridine synthase D (349 aa).

F27 lines the substrate pocket. D80 acts as the Nucleophile in catalysis. N129 is a binding site for substrate. One can recognise a TRUD domain in the interval 155-303 (GVPNYFGPQR…VEAARRAMLL (149 aa)). F329 is a binding site for substrate.

Belongs to the pseudouridine synthase TruD family.

It carries out the reaction uridine(13) in tRNA = pseudouridine(13) in tRNA. In terms of biological role, responsible for synthesis of pseudouridine from uracil-13 in transfer RNAs. The protein is tRNA pseudouridine synthase D of Cronobacter sakazakii (strain ATCC BAA-894) (Enterobacter sakazakii).